A 714-amino-acid polypeptide reads, in one-letter code: Centromere/kinetochore protein zw10 (714 aa).

Belongs to the ZW10 family.

It localises to the cytoplasm. Its subcellular location is the nucleus. It is found in the chromosome. The protein resides in the centromere. The protein localises to the kinetochore. Required for accurate chromosome segregation. This Drosophila grimshawi (Hawaiian fruit fly) protein is Centromere/kinetochore protein zw10 (mit(1)15).